Here is a 621-residue protein sequence, read N- to C-terminus: Replication factor A protein 1 (621 aa).

Residue serine 2 is modified to N-acetylserine. The residue at position 178 (serine 178) is a Phosphoserine; by ATM or ATR. The OB DNA-binding region spans tryptophan 197 to threonine 284. The C4-type zinc finger occupies cysteine 486 to cysteine 508.

Belongs to the replication factor A protein 1 family. As to quaternary structure, component of the heterotrimeric canonical replication protein A complex (RPA). Interacts with POB3. In terms of processing, the N-terminus is blocked.

Its subcellular location is the nucleus. Functionally, as part of the replication protein A (RPA/RP-A), a single-stranded DNA-binding heterotrimeric complex, may play an essential role in DNA replication, recombination and repair. Binds and stabilizes single-stranded DNA intermediates, preventing complementary DNA reannealing and recruiting different proteins involved in DNA metabolism. Binds to single-stranded sequences participating in DNA replication in addition to those mediating transcriptional repression (URS1) and activation (CAR1). Stimulates the activity of a cognate strand exchange protein (SEP1). It cooperates with T-AG and DNA topoisomerase I to unwind template DNA containing the simian virus 40 origin of DNA replication. The protein is Replication factor A protein 1 (RFA1) of Saccharomyces cerevisiae (strain ATCC 204508 / S288c) (Baker's yeast).